Reading from the N-terminus, the 478-residue chain is Glycogen synthase (478 aa).

Position 15 (Lys-15) interacts with ADP-alpha-D-glucose.

Belongs to the glycosyltransferase 1 family. Bacterial/plant glycogen synthase subfamily.

The catalysed reaction is [(1-&gt;4)-alpha-D-glucosyl](n) + ADP-alpha-D-glucose = [(1-&gt;4)-alpha-D-glucosyl](n+1) + ADP + H(+). The protein operates within glycan biosynthesis; glycogen biosynthesis. Synthesizes alpha-1,4-glucan chains using ADP-glucose. This Actinobacillus pleuropneumoniae serotype 5b (strain L20) protein is Glycogen synthase.